Consider the following 349-residue polypeptide: Small ribosomal subunit biogenesis GTPase RsgA (349 aa).

A compositionally biased stretch (basic residues) spans 1-11 (MSKKKLSKGQQ). A disordered region spans residues 1–29 (MSKKKLSKGQQRRVSANHQRRLKKTESKV). A CP-type G domain is found at 102–272 (HSVLTRPDYY…VIDSPGVREF (171 aa)). GTP contacts are provided by residues 158–161 (NKID) and 212–220 (GQSGVGKSS). Residues Cys-296, Cys-301, His-303, and Cys-309 each coordinate Zn(2+).

It belongs to the TRAFAC class YlqF/YawG GTPase family. RsgA subfamily. In terms of assembly, monomer. Associates with 30S ribosomal subunit, binds 16S rRNA. It depends on Zn(2+) as a cofactor.

The protein resides in the cytoplasm. Its function is as follows. One of several proteins that assist in the late maturation steps of the functional core of the 30S ribosomal subunit. Helps release RbfA from mature subunits. May play a role in the assembly of ribosomal proteins into the subunit. Circularly permuted GTPase that catalyzes slow GTP hydrolysis, GTPase activity is stimulated by the 30S ribosomal subunit. This Pectobacterium atrosepticum (strain SCRI 1043 / ATCC BAA-672) (Erwinia carotovora subsp. atroseptica) protein is Small ribosomal subunit biogenesis GTPase RsgA.